We begin with the raw amino-acid sequence, 563 residues long: MWAVLRLALRPCARASPAGPRAYHGDSVASLGTQPDLGSALYQENYKQMKALVNQLHERVEHIKLGGGEKARALHISRGKLLPRERIDNLIDPGSPFLELSQFAGYQLYDNEEVPGGGIITGIGRVSGVECMIIANDATVKGGAYYPVTVKKQLRAQEIAMQNRLPCIYLVDSGGAYLPRQADVFPDRDHFGRTFYNQAIMSSKNIAQIAVVMGSCTAGGAYVPAMADENIIVRKQGTIFLAGPPLVKAATGEEVSAEDLGGADLHCRKSGVSDHWALDDHHALHLTRKVVRNLNYQKKLDVTIEPSEEPLFPADELYGIVGANLKRSFDVREVIARIVDGSRFTEFKAFYGDTLVTGFARIFGYPVGIVGNNGVLFSESAKKGTHFVQLCCQRNIPLLFLQNITGFMVGREYEAEGIAKDGAKMVAAVACAQVPKITLIIGGSYGAGNYGMCGRAYSPRFLYIWPNARISVMGGEQAANVLATITKDQRAREGKQFSSADEAALKEPIIKKFEEEGNPYYSSARVWDDGIIDPADTRLVLGLSFSAALNAPIEKTDFGIFRM.

The transit peptide at 1–22 (MWAVLRLALRPCARASPAGPRA) directs the protein to the mitochondrion. The 258-residue stretch at 49 to 306 (MKALVNQLHE…QKKLDVTIEP (258 aa)) folds into the CoA carboxyltransferase N-terminal domain. A carboxyltransferase region spans residues 49-555 (MKALVNQLHE…SAALNAPIEK (507 aa)). At lysine 70 the chain carries N6-acetyllysine; alternate. The residue at position 70 (lysine 70) is an N6-succinyllysine; alternate. At lysine 141 the chain carries N6-succinyllysine. One can recognise a CoA carboxyltransferase C-terminal domain in the interval 309 to 555 (EPLFPADELY…SAALNAPIEK (247 aa)). The interval 343–372 (RFTEFKAFYGDTLVTGFARIFGYPVGIVGN) is acyl-CoA binding. The residue at position 495 (lysine 495) is an N6-acetyllysine; alternate. Lysine 495 carries the post-translational modification N6-succinyllysine; alternate. An N6-acetyllysine modification is found at lysine 511.

It belongs to the AccD/PCCB family. Probably a dodecamer composed of six biotin-containing alpha subunits (MCCC1) and six beta (MCCC2) subunits.

The protein resides in the mitochondrion matrix. It catalyses the reaction 3-methylbut-2-enoyl-CoA + hydrogencarbonate + ATP = 3-methyl-(2E)-glutaconyl-CoA + ADP + phosphate + H(+). Its pathway is amino-acid degradation; L-leucine degradation; (S)-3-hydroxy-3-methylglutaryl-CoA from 3-isovaleryl-CoA: step 2/3. In terms of biological role, carboxyltransferase subunit of the 3-methylcrotonyl-CoA carboxylase, an enzyme that catalyzes the conversion of 3-methylcrotonyl-CoA to 3-methylglutaconyl-CoA, a critical step for leucine and isovaleric acid catabolism. This Homo sapiens (Human) protein is Methylcrotonoyl-CoA carboxylase beta chain, mitochondrial (MCCC2).